Here is a 77-residue protein sequence, read N- to C-terminus: Conotoxin Ar5.1 b (77 aa).

Residues 1-19 (MLCLPVFIILLLLASPAAS) form the signal peptide. A propeptide spanning residues 20–44 (NPLKTRIQSDLIRAALEDADMKNEK) is cleaved from the precursor.

This sequence belongs to the conotoxin T superfamily. Contains 2 disulfide bonds that can be either 'C1-C3, C2-C4' or 'C1-C4, C2-C3', since these disulfide connectivities have been observed for conotoxins with cysteine framework V (for examples, see AC P0DQQ7 and AC P81755). In terms of tissue distribution, expressed by the venom duct.

The protein localises to the secreted. The polypeptide is Conotoxin Ar5.1 b (Conus arenatus (Sand-dusted cone)).